The chain runs to 380 residues: MAIEMLGLILAGGQGTRLGKLTKDVAKPAVPFGGRYRIIDFALSNCANSNVKNVGVITQYQPLTLNAHIGNGAPWGLNGINSGVTILQPYSSQEGSKWFEGTSHAVYQNISYIDQQNPEYVLILSGDHIYKMDYEAMLESHKEREASLTVSVMEVPLEEASRFGIMNTDDNDRIIEFEEKPKEPKSNLASMGIYIFNWKRLREVLVNGYSKGNPIEDFGGDVIPAYIEAGENVFAYRFKGYWKDVGTIDSLHQSSMEFLDLNNELNITDKSWRIYSHNDISAPQFITEKLKVKNALVGDGCYVDGTVIHSILSQNIHVQEGTTIEDSFIMSGTFIGENVTIKNAIIGENAKIGDNVEIIGEDEVAVIGHGEIKGENKNEQ.

Residues Gly164, 179–180 (EK), and Ser190 contribute to the alpha-D-glucose 1-phosphate site.

This sequence belongs to the bacterial/plant glucose-1-phosphate adenylyltransferase family. As to quaternary structure, homotetramer.

It catalyses the reaction alpha-D-glucose 1-phosphate + ATP + H(+) = ADP-alpha-D-glucose + diphosphate. It functions in the pathway glycan biosynthesis; glycogen biosynthesis. Involved in the biosynthesis of ADP-glucose, a building block required for the elongation reactions to produce glycogen. Catalyzes the reaction between ATP and alpha-D-glucose 1-phosphate (G1P) to produce pyrophosphate and ADP-Glc. This is Glucose-1-phosphate adenylyltransferase from Lactococcus lactis subsp. cremoris (strain SK11).